Consider the following 167-residue polypeptide: Putative N-acetylgalactosamine-6-phosphate deacetylase (167 aa).

This sequence belongs to the metallo-dependent hydrolases superfamily. NagA family.

The enzyme catalyses N-acetyl-D-galactosamine 6-phosphate + H2O = D-galactosamine 6-phosphate + acetate. The chain is Putative N-acetylgalactosamine-6-phosphate deacetylase (agaA) from Escherichia coli (strain K12).